Here is a 770-residue protein sequence, read N- to C-terminus: Nucleus-vacuole junction protein 2 (770 aa).

The Cytoplasmic segment spans residues 1-5; that stretch reads MASLK. A helical; Signal-anchor for type II membrane protein transmembrane segment spans residues 6–26; that stretch reads VFLAVYLLGGITFLPLVLFTL. Residues 27–770 are Lumenal-facing; that stretch reads YKIHLLYSNL…EFEEQREPKL (744 aa). The PH domain maps to 114 to 266; that stretch reads TALQEQILQR…WYYQLINASK (153 aa). Residues asparagine 228, asparagine 263, asparagine 279, asparagine 300, asparagine 391, asparagine 528, and asparagine 529 are each glycosylated (N-linked (GlcNAc...) asparagine). The SMP-LTD domain maps to 304–504; the sequence is NQLTTKWLNA…YPTPNEVYRG (201 aa). 3 disordered regions span residues 541 to 566, 578 to 600, and 615 to 770; these read EGGM…LKDL, TQTT…TKSR, and KDNV…EPKL. The segment covering 554-566 has biased composition (basic and acidic residues); sequence LRPERKKENLKDL. Residues 587 to 596 are compositionally biased toward polar residues; that stretch reads NDDVSSSENS. N-linked (GlcNAc...) asparagine glycans are attached at residues asparagine 595 and asparagine 620. Serine 640 and serine 669 each carry phosphoserine. Basic and acidic residues predominate over residues 679-688; sequence LEGRKEKDTE. Asparagine 700 carries an N-linked (GlcNAc...) asparagine glycan. Composition is skewed to polar residues over residues 713–725 and 736–751; these read FSVS…NSLK and LESS…QNRF. Serine 717 carries the phosphoserine modification. N-linked (GlcNAc...) asparagine glycosylation is present at asparagine 718. Residues serine 720 and serine 723 each carry the phosphoserine modification. The segment covering 756–770 has biased composition (basic and acidic residues); the sequence is FKQDLEFEEQREPKL.

It is found in the endoplasmic reticulum membrane. It localises to the nucleus membrane. Functionally, during endoplasmic reticulum (ER) stress or when cellular ceramide levels increase, induces contacts between the ER and medial-Golgi complex to facilitate non-vesicular transport of ceramides from the ER to the Golgi complex where they are converted to complex sphingolipids, preventing toxic ceramide accumulation. In Saccharomyces cerevisiae (strain ATCC 204508 / S288c) (Baker's yeast), this protein is Nucleus-vacuole junction protein 2.